We begin with the raw amino-acid sequence, 354 residues long: tRNase Z TRZ2, chloroplastic (354 aa).

The segment at 1–21 (MQLSSSFPISPPKIFPSTKHH) is disordered. A chloroplast-targeting transit peptide spans 1–68 (MQLSSSFPIS…EEEEEYRKAR (68 aa)).

Belongs to the RNase Z family. Homodimer. The cofactor is Zn(2+). Ca(2+) serves as cofactor. It depends on Mn(2+) as a cofactor. Mg(2+) is required as a cofactor. As to expression, highly expressed in green and actively dividing tissues.

It is found in the plastid. Its subcellular location is the chloroplast. It catalyses the reaction Endonucleolytic cleavage of RNA, removing extra 3' nucleotides from tRNA precursor, generating 3' termini of tRNAs. A 3'-hydroxy group is left at the tRNA terminus and a 5'-phosphoryl group is left at the trailer molecule.. Functionally, zinc phosphodiesterase, which displays tRNA 3'-processing endonuclease activity. Involved in tRNA maturation, by removing a 3'-trailer from precursor tRNA. The polypeptide is tRNase Z TRZ2, chloroplastic (Arabidopsis thaliana (Mouse-ear cress)).